A 471-amino-acid chain; its full sequence is Pneumolysin (471 aa).

Beta stranded transmembrane passes span 158-171 (MEQL…DFEK), 178-187 (IDFNSVHSGE), 256-265 (SDEVEAAFEA), and 273-285 (APQT…LDNT). The short motif at 427 to 437 (ECTGLAWEWWR) is the Conserved undecapeptide element. The Cholesterol binding motif lies at 459-460 (TL).

This sequence belongs to the cholesterol-dependent cytolysin family. As to quaternary structure, elongated monomers align along their lengths, indicating intersubunit contacts and suggesting the prepore structure. Modeling based on cryo-EM shows a homooligomeric pore complex containing 38-44 subunits; when inserted in the host membrane. The size of isolated pores is detergent-dependent; in amphipol A8-35 homogenous rings form with 42 subunits.

The protein resides in the secreted. The protein localises to the host cell membrane. Erythrocytes hemolysis is inhibited by cholesterol. Functionally, a cholesterol-dependent toxin that causes cytolysis by forming pores in cholesterol-containing host membranes. After binding to target membranes, the protein undergoes a major conformation change, leading to its insertion in the host membrane and formation of an oligomeric pore complex. Cholesterol is required for binding to host membranes, membrane insertion and pore formation; cholesterol binding is mediated by a Thr-Leu pair in the C-terminus. Can be reversibly inactivated by oxidation. This Streptococcus pneumoniae serotype 2 (strain D39 / NCTC 7466) protein is Pneumolysin (ply).